We begin with the raw amino-acid sequence, 468 residues long: MAVLTSRSTDFPRWYQDVLAKAELADNGPVRGTMVIRPYGYAIWERMQAEVDSRIKAAGAVNAYFPLFIPESYLRREAEHVEGFSPELAVVTIGGGKELEEPVVVRPTSETVIGEYLAKWTQSYRDLPLLLNQWANVVRWELRPRLFLRSSEFLWQEGHTAHADEADAAAYARRIALEVYRDFMTQVLAVPVFVGVKTRRERFAGATNTMTCEGMMGDGKALQMATSHELGQNFARAFDIDFLGADGARHLAWTTSWGCSTRMVGGLIMAHGDDNGLRVPPRLAPTQVVVLPVRDEETVVAKARQIAAALTDAGLRVQVDARPGLSFGRRVTDAEIKGIPVRVEVGPRDLAAGNVTLVRRDTSEKVPVPLAEVATRVPVLLGEVQADLYAEALALRESRTTDVATVAEAARAAQAGFARIPWRLVGEEGEAELAEEALTVRCIQTPDGGIPEAGSDADDLVCLIARSY.

The protein belongs to the class-II aminoacyl-tRNA synthetase family. ProS type 3 subfamily. Homodimer.

It is found in the cytoplasm. The enzyme catalyses tRNA(Pro) + L-proline + ATP = L-prolyl-tRNA(Pro) + AMP + diphosphate. Its function is as follows. Catalyzes the attachment of proline to tRNA(Pro) in a two-step reaction: proline is first activated by ATP to form Pro-AMP and then transferred to the acceptor end of tRNA(Pro). This Frankia casuarinae (strain DSM 45818 / CECT 9043 / HFP020203 / CcI3) protein is Proline--tRNA ligase.